The sequence spans 619 residues: Dihydroxy-acid dehydratase 1 (619 aa).

Position 81 (Asp81) interacts with Mg(2+). [2Fe-2S] cluster is bound at residue Cys122. Mg(2+) is bound by residues Asp123 and Lys124. Position 124 is an N6-carboxylysine (Lys124). Residue Cys198 coordinates [2Fe-2S] cluster. Glu494 provides a ligand contact to Mg(2+). Residue Ser520 is the Proton acceptor of the active site.

Belongs to the IlvD/Edd family. As to quaternary structure, homodimer. The cofactor is [2Fe-2S] cluster. Mg(2+) is required as a cofactor.

The enzyme catalyses (2R)-2,3-dihydroxy-3-methylbutanoate = 3-methyl-2-oxobutanoate + H2O. It catalyses the reaction (2R,3R)-2,3-dihydroxy-3-methylpentanoate = (S)-3-methyl-2-oxopentanoate + H2O. It functions in the pathway amino-acid biosynthesis; L-isoleucine biosynthesis; L-isoleucine from 2-oxobutanoate: step 3/4. The protein operates within amino-acid biosynthesis; L-valine biosynthesis; L-valine from pyruvate: step 3/4. Functionally, functions in the biosynthesis of branched-chain amino acids. Catalyzes the dehydration of (2R,3R)-2,3-dihydroxy-3-methylpentanoate (2,3-dihydroxy-3-methylvalerate) into 2-oxo-3-methylpentanoate (2-oxo-3-methylvalerate) and of (2R)-2,3-dihydroxy-3-methylbutanoate (2,3-dihydroxyisovalerate) into 2-oxo-3-methylbutanoate (2-oxoisovalerate), the penultimate precursor to L-isoleucine and L-valine, respectively. This chain is Dihydroxy-acid dehydratase 1, found in Bordetella pertussis (strain Tohama I / ATCC BAA-589 / NCTC 13251).